The sequence spans 301 residues: uncharacterized protein (301 aa).

Active-site charge relay system residues include serine 44 and tyrosine 107. Residue tyrosine 133 is the Proton donor of the active site. Residue lysine 162 is the Schiff-base intermediate with substrate of the active site.

The protein belongs to the DapA family. In terms of assembly, homotetramer.

Its subcellular location is the cytoplasm. This is an uncharacterized protein from Pyrobaculum aerophilum (strain ATCC 51768 / DSM 7523 / JCM 9630 / CIP 104966 / NBRC 100827 / IM2).